We begin with the raw amino-acid sequence, 200 residues long: dITP/XTP pyrophosphatase (200 aa).

7–12 (TQNKRK) serves as a coordination point for substrate. Residues Glu42 and Asp71 each coordinate Mg(2+). Asp71 acts as the Proton acceptor in catalysis. Residues Ser72, 156–159 (FGYD), Lys179, and 184–185 (HR) contribute to the substrate site.

It belongs to the HAM1 NTPase family. In terms of assembly, homodimer. Mg(2+) is required as a cofactor.

It catalyses the reaction XTP + H2O = XMP + diphosphate + H(+). It carries out the reaction dITP + H2O = dIMP + diphosphate + H(+). The enzyme catalyses ITP + H2O = IMP + diphosphate + H(+). Pyrophosphatase that catalyzes the hydrolysis of nucleoside triphosphates to their monophosphate derivatives, with a high preference for the non-canonical purine nucleotides XTP (xanthosine triphosphate), dITP (deoxyinosine triphosphate) and ITP. Seems to function as a house-cleaning enzyme that removes non-canonical purine nucleotides from the nucleotide pool, thus preventing their incorporation into DNA/RNA and avoiding chromosomal lesions. This Malacoplasma penetrans (strain HF-2) (Mycoplasma penetrans) protein is dITP/XTP pyrophosphatase.